We begin with the raw amino-acid sequence, 415 residues long: MKRSTLLSLDAFAKTEEDVRVRTRAGGLITLSCILTTLFLLVNEWGQFNSVVTRPQLVVDRDRHAKLELNMDVTFPSMPCDLVNLDIMDDSGEMQLDILDAGFTMSRLNSEGRPVGDATELHVGGNGDGTAPVNNDPNYCGPCYGAKDQSQNENLAQEEKVCCQDCDAVRSAYLEAGWAFFDGKNIEQCEREGYVSKINEHLNEGCRIKGSAQINRIQGNLHFAPGKPYQNAYGHFHDTSLYDKTSNLNFNHIINHLSFGKPIQSHSKLLGNDKRHGGAVVATSPLDGRQVFPDRNTHFHQFSYFAKIVPTRYEYLDNVVIETAQFSATFHSRPLAGGRDKDHPNTLHVRGGIPGMFVFFEMSPLKVINKEQHGQTWSGFILNCITSIGGVLAVGTVMDKLFYKAQRSIWGKKSQ.

Topologically, residues 1–24 (MKRSTLLSLDAFAKTEEDVRVRTR) are cytoplasmic. Residues 25 to 45 (AGGLITLSCILTTLFLLVNEW) traverse the membrane as a helical segment. Residues 46–376 (GQFNSVVTRP…VINKEQHGQT (331 aa)) lie on the Lumenal side of the membrane. The helical transmembrane segment at 377–397 (WSGFILNCITSIGGVLAVGTV) threads the bilayer. Over 398-415 (MDKLFYKAQRSIWGKKSQ) the chain is Cytoplasmic. The Phenylalanine-tyrosine motif motif lies at 402 to 403 (FY).

This sequence belongs to the ERGIC family. Interacts with ERV41.

It is found in the endoplasmic reticulum membrane. The protein resides in the golgi apparatus membrane. In terms of biological role, constituent of COPII-coated endoplasmic reticulum-derived transport vesicles. Required for efficient transport of a subset of secretory proteins to the Golgi. The C-terminal Phe-Tyr motif is required for exit from the endoplasmic reticulum. Facilitates retrograde transport from the Golgi to the endoplasmic reticulum. The chain is ER-derived vesicles protein ERV46 (ERV46) from Saccharomyces cerevisiae (strain ATCC 204508 / S288c) (Baker's yeast).